A 553-amino-acid polypeptide reads, in one-letter code: Zinc finger CCHC domain-containing protein 8 homolog (553 aa).

Ser59 is modified (phosphoserine). The segment at 183-200 (SSCFNCGDTEHSLRDCTK) adopts a CCHC-type zinc-finger fold. Ser292 and Ser347 each carry phosphoserine. Phosphotyrosine is present on Tyr356. The disordered stretch occupies residues 388-492 (LEEETEDPPL…APSTPFKASY (105 aa)). A compositionally biased stretch (pro residues) spans 395–409 (PPLPPSVPPPQPPPP). Phosphoserine occurs at positions 421 and 423. Polar residues-rich tracts occupy residues 444–456 (ASHNTTANESKSP) and 473–485 (ESGNNEQSRSAPS).

This sequence belongs to the ZCCHC8 family.

Its subcellular location is the nucleus. It localises to the nucleoplasm. Its function is as follows. Scaffolding subunit of the trimeric nuclear exosome targeting (NEXT) complex, a complex that directs a subset of non-coding short-lived RNAs for exosomal degradation. The RNA exosome is fundamental for the degradation of RNA in eukaryotic nuclei. May be involved in pre-mRNA splicing. The polypeptide is Zinc finger CCHC domain-containing protein 8 homolog (Drosophila melanogaster (Fruit fly)).